Here is a 217-residue protein sequence, read N- to C-terminus: 5'-methylthioadenosine/S-adenosylhomocysteine nucleosidase (217 aa).

Glutamate 11 functions as the Proton acceptor in the catalytic mechanism. Substrate is bound by residues glycine 77, valine 139, and 159 to 160 (MD). The Proton donor role is filled by aspartate 183.

It belongs to the PNP/UDP phosphorylase family. MtnN subfamily.

It catalyses the reaction S-adenosyl-L-homocysteine + H2O = S-(5-deoxy-D-ribos-5-yl)-L-homocysteine + adenine. The catalysed reaction is S-methyl-5'-thioadenosine + H2O = 5-(methylsulfanyl)-D-ribose + adenine. It carries out the reaction 5'-deoxyadenosine + H2O = 5-deoxy-D-ribose + adenine. It participates in amino-acid biosynthesis; L-methionine biosynthesis via salvage pathway; S-methyl-5-thio-alpha-D-ribose 1-phosphate from S-methyl-5'-thioadenosine (hydrolase route): step 1/2. Its function is as follows. Catalyzes the irreversible cleavage of the glycosidic bond in both 5'-methylthioadenosine (MTA) and S-adenosylhomocysteine (SAH/AdoHcy) to adenine and the corresponding thioribose, 5'-methylthioribose and S-ribosylhomocysteine, respectively. Also cleaves 5'-deoxyadenosine, a toxic by-product of radical S-adenosylmethionine (SAM) enzymes, into 5-deoxyribose and adenine. The protein is 5'-methylthioadenosine/S-adenosylhomocysteine nucleosidase (mtnN) of Thermotoga maritima (strain ATCC 43589 / DSM 3109 / JCM 10099 / NBRC 100826 / MSB8).